The chain runs to 199 residues: MGDPTNNNDSETKPNPATYWKSRFPVARIKKIMQADQDVGKVAQVTPVIMSKALELFMQSIIQESCKQTRLHQAKRVTVSHLKHAVQSVEQFDFLQDIVEKVPDAPPIKAERKTKRPRARRAANEGEHNESVPAKKVKKNTVKEEEIEKDDESATTETPVKEEPTGEETEADHEEKASVDHGNFSDKTTSEASSASGDE.

A disordered region spans residues 106–199 (PPIKAERKTK…SEASSASGDE (94 aa)). Basic residues predominate over residues 112–121 (RKTKRPRARR). The segment covering 185 to 199 (SDKTTSEASSASGDE) has biased composition (polar residues).

The protein belongs to the NC2 alpha/DRAP1 family.

It is found in the nucleus. In terms of biological role, transcription regulator complex subunit that is essential for cell cycle progression. The chain is Transcription regulator complex subunit bur6 from Schizosaccharomyces pombe (strain 972 / ATCC 24843) (Fission yeast).